A 204-amino-acid chain; its full sequence is Small ribosomal subunit protein uS4 (204 aa).

A disordered region spans residues 25 to 47; that stretch reads SPVNKREYGPGQHGQRRKKPSDY. Positions 93-156 constitute an S4 RNA-binding domain; sequence RRLDAVVYRM…KQFAFVMEAA (64 aa).

It belongs to the universal ribosomal protein uS4 family. Part of the 30S ribosomal subunit. Contacts protein S5. The interaction surface between S4 and S5 is involved in control of translational fidelity.

One of the primary rRNA binding proteins, it binds directly to 16S rRNA where it nucleates assembly of the body of the 30S subunit. In terms of biological role, with S5 and S12 plays an important role in translational accuracy. In Rhodospirillum centenum (strain ATCC 51521 / SW), this protein is Small ribosomal subunit protein uS4.